The sequence spans 228 residues: 7-cyano-7-deazaguanine synthase (228 aa).

9-19 provides a ligand contact to ATP; sequence LSGGPDSTTVL. Positions 193, 203, 206, and 209 each coordinate Zn(2+).

Belongs to the QueC family. The cofactor is Zn(2+).

The catalysed reaction is 7-carboxy-7-deazaguanine + NH4(+) + ATP = 7-cyano-7-deazaguanine + ADP + phosphate + H2O + H(+). It functions in the pathway purine metabolism; 7-cyano-7-deazaguanine biosynthesis. Catalyzes the ATP-dependent conversion of 7-carboxy-7-deazaguanine (CDG) to 7-cyano-7-deazaguanine (preQ(0)). The chain is 7-cyano-7-deazaguanine synthase from Rickettsia conorii (strain ATCC VR-613 / Malish 7).